Reading from the N-terminus, the 161-residue chain is MPSFDTVCEASMVDVKHAVENTTKEITTRFDFKGTPAAIELKDKEITLTGDADFQLSQIEDILRNKLTKRSVDVRFLDKGEVQKIGGDKVKQVIKVRNGIETELAKKIQRLIKDSKIKVQAAIQESKLRVTGAKRDDLQAAMALIKKDITEVPLSFDNFRD.

It belongs to the YajQ family.

Nucleotide-binding protein. The protein is Nucleotide-binding protein Rfer_2692 of Albidiferax ferrireducens (strain ATCC BAA-621 / DSM 15236 / T118) (Rhodoferax ferrireducens).